The following is a 4544-amino-acid chain: Prolow-density lipoprotein receptor-related protein 1 (4544 aa).

The first 19 residues, 1 to 19 (MLTPPLLLLLPLLSALVAA), serve as a signal peptide directing secretion. Residues 20–4419 (AIDAPKTCSP…EHVFSQQQPG (4400 aa)) are Extracellular-facing. LDL-receptor class A domains lie at 25–66 (KTCS…ICPQ) and 70–110 (QRCQ…HCRE). Intrachain disulfides connect Cys-27/Cys-40, Cys-34/Cys-53, Cys-47/Cys-64, Cys-72/Cys-85, Cys-79/Cys-98, and Cys-92/Cys-108. The EGF-like 1 domain maps to 111–149 (LQGNCSRLGCQHHCVPTLDGPTCYCNSSFQLQADGKTCK). The N-linked (GlcNAc...) asparagine glycan is linked to Asn-114. Cystine bridges form between Cys-115/Cys-124, Cys-120/Cys-133, Cys-135/Cys-148, Cys-154/Cys-164, Cys-160/Cys-173, and Cys-175/Cys-188. Asn-136 is a glycosylation site (N-linked (GlcNAc...) asparagine). The EGF-like 2; calcium-binding domain occupies 150 to 189 (DFDECSVYGTCSQLCTNTDGSFICGCVEGYLLQPDNRSCK). N-linked (GlcNAc...) asparagine glycosylation is found at Asn-185, Asn-239, and Asn-274. 3 LDL-receptor class B repeats span residues 292-334 (GNFY…DPAM), 335-378 (GKVF…DLVS), and 379-422 (RLVY…FENY). A glycan (N-linked (GlcNAc...) asparagine) is linked at Asn-357. A glycan (N-linked (GlcNAc...) asparagine) is linked at Asn-446. Positions 474–520 (RSHACENDQYGKPGGCSDICLLANSHKARTCRCRSGFSLGSDGKSCK) constitute an EGF-like 3 domain. 3 cysteine pairs are disulfide-bonded: Cys-478–Cys-493, Cys-489–Cys-504, and Cys-506–Cys-519. 4 LDL-receptor class B repeats span residues 571 to 613 (GFIY…DWMG), 614 to 659 (DNLY…DPLN), 660 to 710 (GWMY…DIPA), and 711 to 754 (GRLY…HGNY). N-linked (GlcNAc...) (complex) asparagine glycosylation is present at Asn-729. One can recognise an EGF-like 4 domain in the interval 803–843 (GTNKCRVNNGGCSSLCLATPGSRQCACAEDQVLDADGVTCL). Disulfide bonds link Cys-807–Cys-818, Cys-814–Cys-827, Cys-829–Cys-842, Cys-854–Cys-866, Cys-861–Cys-879, Cys-873–Cys-890, Cys-895–Cys-907, Cys-902–Cys-920, Cys-914–Cys-931, Cys-936–Cys-948, Cys-943–Cys-961, Cys-955–Cys-971, Cys-976–Cys-989, Cys-984–Cys-1002, Cys-996–Cys-1011, Cys-1015–Cys-1027, Cys-1022–Cys-1040, Cys-1034–Cys-1051, Cys-1062–Cys-1075, Cys-1069–Cys-1088, Cys-1082–Cys-1097, Cys-1104–Cys-1118, Cys-1112–Cys-1131, Cys-1125–Cys-1140, Cys-1145–Cys-1159, Cys-1152–Cys-1172, Cys-1166–Cys-1182, Cys-1185–Cys-1196, Cys-1192–Cys-1206, Cys-1208–Cys-1221, Cys-1227–Cys-1237, Cys-1233–Cys-1246, and Cys-1248–Cys-1261. 8 LDL-receptor class A domains span residues 852–892 (PQCQ…LCHQ), 893–933 (HTCP…TCSA), 934–973 (RTCPPNQFSCASGRCIPISWTCDLDDDCGDRSDESASCAY), 974–1013 (PTCFPLTQFTCNNGRCININWRCDNDNDCGDNSDEAGCSH), 1013–1053 (HSCS…NCTN), 1060–1099 (GGCHTDEFQCRLDGLCIPLRWRCDGDTDCMDSSDEKSCEG), 1102–1142 (HVCD…NCES), and 1143–1182 (LACRPPSHPCANNTSVCLPPDKLCDGNDDCGDGSDEGELC). The Ca(2+) site is built by Trp-871, Asp-874, Asp-876, Asp-878, Asp-884, and Glu-885. An N-linked (GlcNAc...) asparagine glycan is attached at Asn-928. Residues Trp-1032, Asp-1035, Asp-1037, Asp-1039, Asp-1045, and Glu-1046 each contribute to the Ca(2+) site. A glycan (N-linked (GlcNAc...) asparagine) is linked at Asn-1050. Positions 1080, 1083, 1085, 1087, 1093, and 1094 each coordinate Ca(2+). N-linked (GlcNAc...) asparagine glycans are attached at residues Asn-1154 and Asn-1155. EGF-like domains are found at residues 1183 to 1222 (DQCSLNNGGCSHNCSVAPGEGIVCSCPLGMELGPDNHTCQ) and 1223 to 1262 (IQSYCAKHLKCSQKCDQNKFSVKCSCYEGWVLEPDGESCR). N-linked (GlcNAc...) asparagine glycosylation is found at Asn-1195 and Asn-1218. LDL-receptor class B repeat units follow at residues 1309–1355 (SALY…DWIA), 1356–1398 (GNIY…DPRD), 1399–1445 (GILF…DYLE), 1446–1490 (KRIL…YGGE), and 1491–1531 (VYWT…YHPS). N-linked (GlcNAc...) (complex) asparagine glycosylation is present at Asn-1511. One can recognise an EGF-like 7 domain in the interval 1536 to 1579 (APNPCEANGGQGPCSHLCLINYNRTVSCACPHLMKLHKDNTTCY). Disulfide bonds link Cys-1540–Cys-1553, Cys-1549–Cys-1563, and Cys-1565–Cys-1578. N-linked (GlcNAc...) asparagine glycosylation is found at Asn-1558, Asn-1575, Asn-1616, and Asn-1645. 4 LDL-receptor class B repeats span residues 1627-1669 (QRVY…DWVS), 1670-1713 (RNLF…HPLR), 1714-1753 (GKLYWTDGDNISMANMDGSNRTLLFSGQKGPVGLAIDFPE), and 1754-1798 (SKLY…MGDK). Asn-1723, Asn-1733, Asn-1763, and Asn-1825 each carry an N-linked (GlcNAc...) asparagine glycan. The EGF-like 8 domain maps to 1846–1887 (GTNPCSVNNGDCSQLCLPTSETTRSCMCTAGYSLRSGQQACE). 3 disulfide bridges follow: Cys-1850–Cys-1861, Cys-1857–Cys-1871, and Cys-1873–Cys-1886. Asn-1933 carries an N-linked (GlcNAc...) asparagine glycan. LDL-receptor class B repeat units lie at residues 1934–1976 (DTIY…DWIA), 1977–2019 (GNIY…HPEK), 2020–2063 (GYLF…DYQD), and 2064–2107 (GKLY…FEDF). N-linked (GlcNAc...) asparagine glycosylation occurs at Asn-1995. An N6-acetyllysine modification is found at Lys-2009. N-linked (GlcNAc...) asparagine glycosylation is present at Asn-2048. N-linked (GlcNAc...) asparagine glycans are attached at residues Asn-2117 and Asn-2127. An EGF-like 9 domain is found at 2155-2195 (GTNVCAVANGGCQQLCLYRGRGQRACACAHGMLAEDGASCR). 3 disulfide bridges follow: Cys-2159/Cys-2170, Cys-2166/Cys-2180, and Cys-2182/Cys-2194. LDL-receptor class B repeat units follow at residues 2253–2294 (NRIF…HRGW), 2295–2343 (DTLY…DECQ), 2344–2388 (NLMF…DHRA), 2389–2431 (EKLY…YGEH), and 2432–2473 (IFWT…VAND). Asn-2472 is a glycosylation site (N-linked (GlcNAc...) asparagine). In terms of domain architecture, EGF-like 10 spans 2478 to 2518 (ELSPCRINNGGCQDLCLLTHQGHVNCSCRGGRILQDDLTCR). 3 cysteine pairs are disulfide-bonded: Cys-2482–Cys-2493, Cys-2489–Cys-2503, and Cys-2505–Cys-2517. N-linked (GlcNAc...) asparagine glycosylation is present at Asn-2502. Asn-2521 is a glycosylation site (N-linked (GlcNAc...) asparagine). LDL-receptor class A domains lie at 2522 to 2563 (SSCR…YCNS), 2564 to 2602 (RRCKKTFRQCSNGRCVSNMLWCNGADDCGDGSDEIPCNK), 2603 to 2641 (TACGVGEFRCRDGTCIGNSSRCNQFVDCEDASDEMNCSA), 2642 to 2690 (TDCS…DCPG), 2694 to 2732 (PRCPLNYFACPSGRCIPMSWTCDKEDDCEHGEDETHCNK), 2732 to 2771 (KFCSEAQFECQNHRCISKQWLCDGSDDCGDGSDEAAHCEG), and 2772 to 2814 (KTCG…GCLY). 6 disulfide bridges follow: Cys-2524-Cys-2537, Cys-2532-Cys-2550, Cys-2544-Cys-2561, Cys-2566-Cys-2578, Cys-2573-Cys-2591, and Cys-2585-Cys-2600. Asn-2539 is a glycosylation site (N-linked (GlcNAc...) asparagine). N-linked (GlcNAc...) asparagine glycosylation is present at Asn-2601. 15 cysteine pairs are disulfide-bonded: Cys-2605–Cys-2617, Cys-2612–Cys-2630, Cys-2624–Cys-2639, Cys-2644–Cys-2666, Cys-2660–Cys-2679, Cys-2673–Cys-2688, Cys-2696–Cys-2708, Cys-2703–Cys-2721, Cys-2715–Cys-2730, Cys-2734–Cys-2746, Cys-2741–Cys-2759, Cys-2753–Cys-2769, Cys-2774–Cys-2787, Cys-2781–Cys-2800, and Cys-2794–Cys-2812. 2 N-linked (GlcNAc...) asparagine glycosylation sites follow: Asn-2620 and Asn-2638. An N-linked (GlcNAc...) asparagine glycan is attached at Asn-2815. LDL-receptor class A domains lie at 2816–2855 (STCDDREFMCQNRQCIPKHFVCDHDRDCADGSDESPECEY), 2856–2899 (PTCG…HCTS), and 2902–2940 (HKCNASSQFLCSSGRCVAEALLCNGQDDCGDSSDERGCH). Disulfide bonds link Cys-2818-Cys-2830, Cys-2825-Cys-2843, Cys-2837-Cys-2853, Cys-2858-Cys-2870, Cys-2865-Cys-2884, Cys-2878-Cys-2897, Cys-2904-Cys-2917, Cys-2912-Cys-2930, Cys-2924-Cys-2939, Cys-2944-Cys-2956, Cys-2952-Cys-2965, Cys-2967-Cys-2980, Cys-2986-Cys-2996, Cys-2992-Cys-3005, and Cys-3007-Cys-3021. Asn-2905 carries N-linked (GlcNAc...) asparagine glycosylation. The EGF-like 11 domain occupies 2941–2981 (INECLSRKLSGCSQDCEDLKIGFKCRCRPGFRLKDDGRTCA). The region spanning 2982–3022 (DVDECSTTFPCSQRCINTHGSYKCLCVEGYAPRGGDPHSCK) is the EGF-like 12; calcium-binding domain. N-linked (GlcNAc...) asparagine glycans are attached at residues Asn-3048 and Asn-3089. LDL-receptor class B repeat units follow at residues 3069 to 3113 (QMIY…DWVG), 3114 to 3156 (GNLY…DVQN), 3157 to 3200 (GYLY…DYVT), 3201 to 3243 (ERIY…FEDY), and 3244 to 3284 (VYWT…FHAL). Asn-3264 carries N-linked (GlcNAc...) asparagine glycosylation. In terms of domain architecture, EGF-like 13 spans 3290–3331 (PNHPCKVNNGGCSNLCLLSPGGGHKCACPTNFYLGSDGRTCV). Intrachain disulfides connect Cys-3294–Cys-3305, Cys-3301–Cys-3315, and Cys-3317–Cys-3330. 11 LDL-receptor class A domains span residues 3332 to 3371 (SNCTASQFVCKNDKCIPFWWKCDTEDDCGDHSDEPPDCPE), 3372 to 3410 (FKCRPGQFQCSTGICTNPAFICDGDNDCQDNSDEANCDI), 3411 to 3450 (HVCLPSQFKCTNTNRCIPGIFRCNGQDNCGDGEDERDCPE), 3451 to 3491 (VTCA…NCTQ), 3492 to 3533 (MTCG…ECDE), 3534 to 3572 (RTCEPYQFRCKNNRCVPGRWQCDYDNDCGDNSDEESCTP), 3573 to 3611 (RPCSESEFSCANGRCIAGRWKCDGDHDCADGSDEKDCTP), 3611 to 3649 (PRCDMDQFQCKSGHCIPLRWRCDADADCMDGSDEEACGT), 3652 to 3692 (RTCP…ECAR), 3693 to 3733 (FVCP…DCEP), and 3739 to 3778 (THCKDKKEFLCRNQRCLSSSLRCNMFDDCGDGSDEEDCSI). Asn-3333 carries N-linked (GlcNAc...) asparagine glycosylation. 39 disulfide bridges follow: Cys-3334-Cys-3346, Cys-3341-Cys-3359, Cys-3353-Cys-3369, Cys-3374-Cys-3386, Cys-3381-Cys-3399, Cys-3393-Cys-3408, Cys-3413-Cys-3426, Cys-3420-Cys-3439, Cys-3433-Cys-3448, Cys-3453-Cys-3466, Cys-3460-Cys-3479, Cys-3473-Cys-3489, Cys-3494-Cys-3507, Cys-3501-Cys-3520, Cys-3514-Cys-3531, Cys-3536-Cys-3548, Cys-3543-Cys-3561, Cys-3555-Cys-3570, Cys-3575-Cys-3587, Cys-3582-Cys-3600, Cys-3594-Cys-3609, Cys-3613-Cys-3625, Cys-3620-Cys-3638, Cys-3632-Cys-3647, Cys-3654-Cys-3666, Cys-3661-Cys-3679, Cys-3673-Cys-3690, Cys-3695-Cys-3709, Cys-3703-Cys-3722, Cys-3716-Cys-3731, Cys-3741-Cys-3754, Cys-3749-Cys-3767, Cys-3761-Cys-3776, Cys-3785-Cys-3798, Cys-3792-Cys-3807, Cys-3809-Cys-3822, Cys-3828-Cys-3838, Cys-3834-Cys-3847, and Cys-3849-Cys-3860. A glycan (N-linked (GlcNAc...) asparagine) is linked at Asn-3488. N-linked (GlcNAc...) asparagine glycosylation is present at Asn-3662. 2 consecutive EGF-like domains span residues 3781–3823 (KLTS…PGCQ) and 3824–3861 (DINECLRFGTCSQLCNNTKGGHLCSCARNFMKTHNTCK). Asn-3788 carries N-linked (GlcNAc...) asparagine glycosylation. An N-linked (GlcNAc...) asparagine glycan is attached at Asn-3839. 4 LDL-receptor class B repeats span residues 3912–3954 (GRVY…HLNI), 3970–4012 (GNVY…DPLR), 4013–4056 (GTMY…DYHN), and 4057–4101 (ERLY…FEDY). A Recognition site for proteolytical processing motif is present at residues 3940 to 3943 (RHRR). A glycan (N-linked (GlcNAc...) asparagine) is linked at Asn-3953. Residues Asn-4075 and Asn-4125 are each glycosylated (N-linked (GlcNAc...) asparagine). 7 consecutive EGF-like domains span residues 4147-4183 (VTNPCDRKKCEWLCLLSPSGPVCTCPNGKRLDNGTCV), 4196-4232 (RPGTCNLQCFNGGSCFLNARRQPKCRCQPRYTGDKCE), 4232-4268 (ELDQCWEHCRNGGTCAASPSGMPTCRCPTGFTGPKCT), 4268-4304 (TQQVCAGYCANNSTCTVNQGNQPQCRCLPGFLGDRCQ), 4304-4340 (QYRQCSGYCENFGTCQMAADGSRQCRCTAYFEGSRCE), 4340-4375 (EVNKCSRCLEGACVVNKQSGDVTCNCTDGRVAPSCL), and 4373-4409 (SCLTCVGHCSNGGSCTMNSKMMPECQCPPHMTGPRCE). 17 disulfide bridges follow: Cys-4151–Cys-4160, Cys-4156–Cys-4169, Cys-4171–Cys-4182, Cys-4200–Cys-4210, Cys-4204–Cys-4220, Cys-4222–Cys-4231, Cys-4236–Cys-4246, Cys-4240–Cys-4256, Cys-4258–Cys-4267, Cys-4272–Cys-4282, Cys-4276–Cys-4292, Cys-4294–Cys-4303, Cys-4308–Cys-4318, Cys-4312–Cys-4328, Cys-4330–Cys-4339, Cys-4344–Cys-4352, and Cys-4347–Cys-4363. N-linked (GlcNAc...) asparagine glycosylation is present at Asn-4179. Asn-4278 and Asn-4279 each carry an N-linked (GlcNAc...) asparagine glycan. Asn-4364 carries an N-linked (GlcNAc...) asparagine glycan. Intrachain disulfides connect Cys-4365–Cys-4374, Cys-4377–Cys-4387, Cys-4381–Cys-4397, and Cys-4399–Cys-4408. A helical membrane pass occupies residues 4420 to 4444 (HIASILIPLLLLLLLVLVAGVVFWY). The Cytoplasmic portion of the chain corresponds to 4445–4544 (KRRVQGAKGF…PEDEIGDPLA (100 aa)). The interaction with MAFB stretch occupies residues 4445–4544 (KRRVQGAKGF…PEDEIGDPLA (100 aa)). Thr-4460 bears the Phosphothreonine mark. The short motif at 4502–4507 (FTNPVY) is the NPXY motif element. Residue Tyr-4507 is modified to Phosphotyrosine. A phosphoserine mark is found at Ser-4517, Ser-4520, and Ser-4523.

The protein belongs to the LDLR family. As to quaternary structure, heterodimer of an 85-kDa membrane-bound carboxyl subunit and a non-covalently attached 515-kDa N-terminal subunit. Intracellular domain interacts with MAFB. Found in a complex with PID1/PCLI1, LRP1 and CUBNI. Interacts with SNX17, PID1/PCLI1, PDGF and CUBN. The intracellular domain interacts with SHC1, GULP1 and DAB1. Can weakly interact (via NPXY motif) with DAB2 (via PID domain); the interaction is enhanced by tyrosine phosphorylation of the NPXY motif. Interacts with MDK; promotes neuronal survival. Interacts with LRPAP1; this interaction is followed by rapid internalization. Interacts with uPA/PLAU and PAI1/SERPINE1, either individually or in complex with each other, leading to rapid endocytosis; this interaction is abolished in the presence of LRPAP1/RAP. Also interacts with tPA/PLAT alone or in complex with SERPINE1. Interacts with the urokinase receptor PLAUR; this interaction leads to PLAUR internalization and is impaired in the presence of SORL1. Interacts with PDGFB. Interacts with TAU/MAPT, leading to endocytosis; this interaction is reduced in the presence of LRPAP1/RAP. Interacts with IGFBP3; this interaction mediates cell growth inhibition independently of IGF1. Interacts with ADGRG6. In terms of assembly, (Microbial infection) Interacts with bacterial exotoxins. (Microbial infection) Interacts with Rift valley fever virus (RVFV) glycoprotein N; this interaction facilitates virus entry. Cleaved into a 85 kDa membrane-spanning subunit (LRP-85) and a 515 kDa large extracellular domain (LRP-515) that remains non-covalently associated. Gamma-secretase-dependent cleavage of LRP-85 releases the intracellular domain from the membrane. Post-translationally, the N-terminus is blocked. In terms of processing, phosphorylated on serine and threonine residues. Phosphorylated on tyrosine residues upon stimulation with PDGF. Tyrosine phosphorylation promotes interaction with SHC1. In terms of tissue distribution, most abundant in liver, brain and lung.

The protein localises to the cell membrane. Its subcellular location is the membrane. It is found in the coated pit. It localises to the cytoplasm. The protein resides in the nucleus. The protein localises to the golgi outpost. Its subcellular location is the cytoskeleton. It is found in the microtubule organizing center. In terms of biological role, endocytic receptor involved in endocytosis and in phagocytosis of apoptotic cells. Required for early embryonic development. Involved in cellular lipid homeostasis. Involved in the plasma clearance of chylomicron remnants and activated LRPAP1 (alpha 2-macroglobulin), as well as the local metabolism of complexes between plasminogen activators and their endogenous inhibitors. Acts as an LRPAP1 alpha-2-macroglobulin receptor. Acts as TAU/MAPT receptor and controls the endocytosis of TAU/MAPT as well as its subsequent spread. May modulate cellular events, such as APP metabolism, kinase-dependent intracellular signaling, neuronal calcium signaling as well as neurotransmission. Also acts as a receptor for IGFBP3 to mediate cell growth inhibition. Functionally, (Microbial infection) Functions as a receptor for Pseudomonas aeruginosa exotoxin A. This Homo sapiens (Human) protein is Prolow-density lipoprotein receptor-related protein 1.